The chain runs to 151 residues: MAARLLSLYGRCLSAAGAMRGLPAARVRWESSRAVIAPSGVEKKRQREPTMQWQEDPEPEDENVYAKNPDFHGYDSDPVVDVWNMRAVFFFGFSIVLVFGTTFVAYVPDYRMQEWARREAERLVKYREVNGLPIMESNYFDPSKIQLPEDD.

Residues 1 to 29 (MAARLLSLYGRCLSAAGAMRGLPAARVRW) constitute a mitochondrion transit peptide. The disordered stretch occupies residues 40-62 (GVEKKRQREPTMQWQEDPEPEDE). Residues 87–107 (AVFFFGFSIVLVFGTTFVAYV) form a helical membrane-spanning segment.

Belongs to the complex I NDUFB11 subunit family. Complex I is composed of 45 different subunits. Interacts with BCAP31.

Its subcellular location is the mitochondrion inner membrane. Accessory subunit of the mitochondrial membrane respiratory chain NADH dehydrogenase (Complex I), that is believed not to be involved in catalysis. Complex I functions in the transfer of electrons from NADH to the respiratory chain. The immediate electron acceptor for the enzyme is believed to be ubiquinone. This chain is NADH dehydrogenase [ubiquinone] 1 beta subcomplex subunit 11, mitochondrial (Ndufb11), found in Mus musculus (Mouse).